A 206-amino-acid chain; its full sequence is Small ribosomal subunit protein uS4B (206 aa).

The S4 RNA-binding domain maps to 96 to 156; sequence GRLDNVVYRM…EKAKKQSRIG (61 aa).

Belongs to the universal ribosomal protein uS4 family. As to quaternary structure, part of the 30S ribosomal subunit. Contacts protein S5. The interaction surface between S4 and S5 is involved in control of translational fidelity.

One of the primary rRNA binding proteins, it binds directly to 16S rRNA where it nucleates assembly of the body of the 30S subunit. In terms of biological role, with S5 and S12 plays an important role in translational accuracy. This is Small ribosomal subunit protein uS4B from Psychromonas ingrahamii (strain DSM 17664 / CCUG 51855 / 37).